A 350-amino-acid chain; its full sequence is Small ribosomal subunit protein uS3 (350 aa).

Positions 38-106 (IRKMMSRGME…QVQLNILEVK (69 aa)) constitute a KH type-2 domain. The tract at residues 211-350 (AEREAQEALQ…TPGTPEKAEE (140 aa)) is disordered. Positions 222–232 (QTRRDRPRRGP) are enriched in basic residues. The segment covering 261–350 (NAPAAETAAS…TPGTPEKAEE (90 aa)) has biased composition (low complexity).

Belongs to the universal ribosomal protein uS3 family. Part of the 30S ribosomal subunit. Forms a tight complex with proteins S10 and S14.

Functionally, binds the lower part of the 30S subunit head. Binds mRNA in the 70S ribosome, positioning it for translation. The protein is Small ribosomal subunit protein uS3 of Frankia alni (strain DSM 45986 / CECT 9034 / ACN14a).